Consider the following 212-residue polypeptide: Peptide methionine sulfoxide reductase MsrA (212 aa).

Residue cysteine 51 is part of the active site.

Belongs to the MsrA Met sulfoxide reductase family.

The catalysed reaction is L-methionyl-[protein] + [thioredoxin]-disulfide + H2O = L-methionyl-(S)-S-oxide-[protein] + [thioredoxin]-dithiol. It carries out the reaction [thioredoxin]-disulfide + L-methionine + H2O = L-methionine (S)-S-oxide + [thioredoxin]-dithiol. Has an important function as a repair enzyme for proteins that have been inactivated by oxidation. Catalyzes the reversible oxidation-reduction of methionine sulfoxide in proteins to methionine. The chain is Peptide methionine sulfoxide reductase MsrA from Vibrio cholerae serotype O1 (strain ATCC 39541 / Classical Ogawa 395 / O395).